The chain runs to 91 residues: Cell division protein FtsB (91 aa).

Residues 1–3 (MRW) are Cytoplasmic-facing. Residues 4-21 (PVIILAVLVVVLQYPLWL) traverse the membrane as a helical segment. Residues 22-91 (GKGGWLRVWE…EIFVQVPQKH (70 aa)) are Periplasmic-facing. Residues 28–72 (RVWEVDRKLHEQREENTRLEERNAGLDAEVRDLKSGNEAIEERAR) adopt a coiled-coil conformation.

This sequence belongs to the FtsB family. In terms of assembly, part of a complex composed of FtsB, FtsL and FtsQ.

It is found in the cell inner membrane. In terms of biological role, essential cell division protein. May link together the upstream cell division proteins, which are predominantly cytoplasmic, with the downstream cell division proteins, which are predominantly periplasmic. The chain is Cell division protein FtsB from Azoarcus sp. (strain BH72).